Consider the following 72-residue polypeptide: Small ribosomal subunit protein bS18c (72 aa).

It belongs to the bacterial ribosomal protein bS18 family. As to quaternary structure, part of the 30S ribosomal subunit.

It is found in the plastid. The protein resides in the chloroplast. This is Small ribosomal subunit protein bS18c from Phaeodactylum tricornutum (strain CCAP 1055/1).